Consider the following 255-residue polypeptide: MVLLLVILIPVLVSSAGTSAHYEMLGTCRMVCDPYGGTKAPSTAATPDRGLMQSLPTFIQGPKGEAGRPGKAGPRGPPGEPGPPGPMGPPGEKGEPGRQGLPGPPGAPGLNAAGAISAATYSTVPKIAFYAGLKRQHEGYEVLKFDDVVTNLGNHYDPTTGKFTCSIPGIYFFTYHVLMRGGDGTSMWADLCKNNQVRASAIAQDADQNYDYASNSVVLHLEPGDEVYIKLDGGKAHGGNNNKYSTFSGFIIYAD.

The first 20 residues, methionine 1–alanine 20, serve as a signal peptide directing secretion. Positions lysine 39–glycine 109 are disordered. The region spanning glycine 61–asparagine 111 is the Collagen-like domain. Residues arginine 75–proline 89 are compositionally biased toward pro residues. Residues serine 122–aspartate 255 form the C1q domain.

As to quaternary structure, forms homooligomers. Interacts with ADGRB3. Interacts with C1QL2 and C1QL4, when proteins are coexpressed; this interaction does not occur after secretion. Highly expressed in adipose tissue, with expression levels at least 2 orders of magnitude higher than in other tissues, including brain and kidney.

It localises to the secreted. Its function is as follows. May regulate the number of excitatory synapses that are formed on hippocampus neurons. Has no effect on inhibitory synapses. Plays a role in glucose homeostasis. Via AMPK signaling pathway, stimulates glucose uptake in adipocytes, myotubes and hepatocytes and enhances insulin-stimulated glucose uptake. In a hepatoma cell line, reduces the expression of gluconeogenic enzymes G6PC1 and PCK1 and hence decreases de novo glucose production. The chain is Complement C1q-like protein 3 (C1QL3) from Homo sapiens (Human).